The primary structure comprises 309 residues: Mitochondrial phosphate carrier protein 1, mitochondrial (309 aa).

Residues 1 to 15 (MTRVKSKLDEELSSP) lie on the Mitochondrial intermembrane side of the membrane. Residues 16–36 (WFYTVCTMGGMLSAGTTHLAI) traverse the membrane as a helical segment. Solcar repeat units lie at residues 16–100 (WFYT…FKTL), 109–193 (NRTS…SVEF), and 210–289 (QQLG…IKVL). At 37–74 (TPLDVLKVNMQVNPVKYNSIPSGFSTLLREHGHSYLWR) the chain is on the mitochondrial matrix side. The helical transmembrane segment at 75-94 (GWSGKLLGYGVQGGCRFGLY) threads the bilayer. Over 95-111 (EYFKTLYSDVLPNHNRT) the chain is Mitochondrial intermembrane. Residues 112 to 132 (SIYFLSSASAQIFADMALCPF) form a helical membrane-spanning segment. At 133-167 (EAIKVRVQTQPMFAKGLLDGFPRVYRSEGLAGFHR) the chain is on the mitochondrial matrix side. Residues 168–187 (GLFPLWCRNLPFSMVMFSTF) traverse the membrane as a helical segment. The Mitochondrial intermembrane portion of the chain corresponds to 188–208 (EQSVEFIYQKIIQKRKQDCSK). Residues 209-229 (AQQLGVTCLAGYTAGAVGTII) traverse the membrane as a helical segment. At 230–268 (SNPADVVLSSLYNNKAKNVLQAVRNIGFVGLFTRSLPVR) the chain is on the mitochondrial matrix side. A helical transmembrane segment spans residues 269 to 289 (ITIVGPVITLQWFFYDAIKVL). The Mitochondrial intermembrane portion of the chain corresponds to 290–309 (SGFPTSGGVKKPVDAAKLSV).

The protein belongs to the mitochondrial carrier (TC 2.A.29) family. In terms of tissue distribution, expressed in stems, leaves and flowers. Strong expression in the stamens of flowers.

It is found in the mitochondrion inner membrane. Transport of phosphate groups from the cytosol to the mitochondrial matrix. Mediates salt stress tolerance through an ATP-dependent pathway and via modulation of the gibberellin metabolism. This Arabidopsis thaliana (Mouse-ear cress) protein is Mitochondrial phosphate carrier protein 1, mitochondrial (MPT1).